The following is a 251-amino-acid chain: UPF0246 protein PEPE_1842 (251 aa).

It belongs to the UPF0246 family.

This Pediococcus pentosaceus (strain ATCC 25745 / CCUG 21536 / LMG 10740 / 183-1w) protein is UPF0246 protein PEPE_1842.